Here is a 188-residue protein sequence, read N- to C-terminus: Photosystem I assembly protein Ycf4 (188 aa).

The next 2 membrane-spanning stretches (helical) occupy residues 26-48 (MLWASVSAIGGIGFLLAGLSSYF) and 68-90 (AALTFYGVAGTLLSAYLWFVFFL).

The protein belongs to the Ycf4 family.

It is found in the cellular thylakoid membrane. Its function is as follows. Seems to be required for the assembly of the photosystem I complex. The sequence is that of Photosystem I assembly protein Ycf4 from Picosynechococcus sp. (strain ATCC 27264 / PCC 7002 / PR-6) (Agmenellum quadruplicatum).